We begin with the raw amino-acid sequence, 478 residues long: Glycogen synthase (478 aa).

Lys20 contributes to the ADP-alpha-D-glucose binding site.

It belongs to the glycosyltransferase 1 family. Bacterial/plant glycogen synthase subfamily.

It catalyses the reaction [(1-&gt;4)-alpha-D-glucosyl](n) + ADP-alpha-D-glucose = [(1-&gt;4)-alpha-D-glucosyl](n+1) + ADP + H(+). The protein operates within glycan biosynthesis; glycogen biosynthesis. Its function is as follows. Synthesizes alpha-1,4-glucan chains using ADP-glucose. The sequence is that of Glycogen synthase from Cereibacter sphaeroides (strain ATCC 17025 / ATH 2.4.3) (Rhodobacter sphaeroides).